A 642-amino-acid polypeptide reads, in one-letter code: Threonine--tRNA ligase (642 aa).

Residues 1–61 (MPVITLPDGS…ESDAQLAIIT (61 aa)) form the TGS domain. The segment at 243-534 (DHRKIGKQLD…LTEEYAGFFP (292 aa)) is catalytic. Positions 334, 385, and 511 each coordinate Zn(2+).

It belongs to the class-II aminoacyl-tRNA synthetase family. In terms of assembly, homodimer. It depends on Zn(2+) as a cofactor.

Its subcellular location is the cytoplasm. It carries out the reaction tRNA(Thr) + L-threonine + ATP = L-threonyl-tRNA(Thr) + AMP + diphosphate + H(+). Functionally, catalyzes the attachment of threonine to tRNA(Thr) in a two-step reaction: L-threonine is first activated by ATP to form Thr-AMP and then transferred to the acceptor end of tRNA(Thr). Also edits incorrectly charged L-seryl-tRNA(Thr). In Yersinia enterocolitica serotype O:8 / biotype 1B (strain NCTC 13174 / 8081), this protein is Threonine--tRNA ligase.